The following is a 629-amino-acid chain: tRNA uridine 5-carboxymethylaminomethyl modification enzyme MnmG (629 aa).

FAD is bound by residues 13–18 (GGGHAG), valine 125, and serine 180. Residue 273 to 287 (GPRYCPSIEDKVMRF) coordinates NAD(+). An FAD-binding site is contributed by glutamine 370.

It belongs to the MnmG family. In terms of assembly, homodimer. Heterotetramer of two MnmE and two MnmG subunits. Requires FAD as cofactor.

Its subcellular location is the cytoplasm. In terms of biological role, NAD-binding protein involved in the addition of a carboxymethylaminomethyl (cmnm) group at the wobble position (U34) of certain tRNAs, forming tRNA-cmnm(5)s(2)U34. The polypeptide is tRNA uridine 5-carboxymethylaminomethyl modification enzyme MnmG (Escherichia coli (strain SMS-3-5 / SECEC)).